Consider the following 34-residue polypeptide: MSDIN-like toxin proprotein 2 (34 aa).

A propeptide spanning residues 1 to 10 is cleaved from the precursor; the sequence is MSDINTARLP. Positions 11–20 form a cross-link, cyclopeptide (Phe-Pro); it reads FYQFPDFKYP. The propeptide occupies 21–34; it reads CVGDDIEMVLARGE.

Belongs to the MSDIN fungal toxin family. Processed by the macrocyclase-peptidase enzyme POPB to yield a toxic cyclic decapeptide. POPB first removes 10 residues from the N-terminus. Conformational trapping of the remaining peptide forces the enzyme to release this intermediate rather than proceed to macrocyclization. The enzyme rebinds the remaining peptide in a different conformation and catalyzes macrocyclization of the N-terminal 10 residues.

In terms of biological role, probable toxin that belongs to the MSDIN-like toxin family responsible for a large number of food poisoning cases and deaths. This is MSDIN-like toxin proprotein 2 from Amanita bisporigera (Destroying angel).